The following is a 1482-amino-acid chain: Lysine-specific demethylase rbr-2 (1482 aa).

A disordered region spans residues 1–45 (MRGRRQEDIATTSSAPSTSTSHKKKTVSSNGSFRPRTQSNPGGKM). The segment covering 11–20 (TTSSAPSTST) has biased composition (low complexity). A compositionally biased stretch (polar residues) spans 30–41 (NGSFRPRTQSNP). The region spanning 61 to 102 (APVYYPTSEEFADPIEYVAKIRPDAERYGVVKIVPPSDFKPP) is the JmjN domain. The ARID domain occupies 126–223 (VKEKHTFIER…HIEPFNRNLK (98 aa)). The segment at 244 to 316 (YQHHHGTMRS…SKTEEDEEEN (73 aa)) is disordered. Positions 251 to 264 (MRSEPENTDGKNTE) are enriched in basic and acidic residues. The span at 277-288 (GRRRSKNKKPVP) shows a compositional bias: basic residues. The PHD-type 1 zinc finger occupies 322-374 (QVYCVSCNEGKDEDLLLLCDIEGCNSGRHTYCCDPVLDEVPEGEWRCPKCIES). Residues 471–637 (QYANHAWNLN…KGRECVQSYS (167 aa)) form the JmjC domain. Residues histidine 517, aspartate 520, and histidine 605 each contribute to the Fe cation site. A PHD-type 2 zinc finger spans residues 1206–1260 (LEGCCCLGGNKSDSSESVLSCIMCESQFHVRCCEWSTFFQHLPKGCFMCVRCLRG). The disordered stretch occupies residues 1361 to 1403 (QQRPVKSKPSASLFDPKLNSKRKRPNPSQKDSSKSKSRKRQGQ). The segment at 1416–1471 (FKSCQARSCLKPFGDSVNWVMCDAGCKNWFHVICVGFTLREINDMHEYRCSSCLDH) adopts a PHD-type 3 zinc-finger fold.

It belongs to the JARID1 histone demethylase family. Fe(2+) is required as a cofactor.

The protein localises to the nucleus. It catalyses the reaction N(6),N(6),N(6)-trimethyl-L-lysyl(4)-[histone H3] + 3 2-oxoglutarate + 3 O2 = L-lysyl(4)-[histone H3] + 3 formaldehyde + 3 succinate + 3 CO2. Functionally, histone demethylase that specifically demethylates 'Lys-4' of histone H3, thereby playing a central role in histone code. Does not demethylate histone H3 'Lys-9', H3 'Lys-27', H3 'Lys-36', H3 'Lys-79' or H4 'Lys-20'. Demethylates trimethylated and dimethylated but not monomethylated H3 'Lys-4'. Involved in larval development and vulva formation. This chain is Lysine-specific demethylase rbr-2 (rbr-2), found in Caenorhabditis briggsae.